The chain runs to 332 residues: HTH-type transcriptional regulator IdnR (332 aa).

One can recognise an HTH lacI-type domain in the interval 6–60 (ISLQDIATLAGVTKMTVSRYIRSPKKVAKETGERIAKIMEEINYIPNRAPGMLLN). The segment at residues 8 to 27 (LQDIATLAGVTKMTVSRYIR) is a DNA-binding region (H-T-H motif).

Idn operon regulator. May repress gntKU and gntT genes when growing on L-idonate. The polypeptide is HTH-type transcriptional regulator IdnR (idnR) (Escherichia coli (strain K12)).